Consider the following 297-residue polypeptide: Protein-methionine-sulfoxide reductase catalytic subunit MsrP (297 aa).

Positions 1 to 35 form a signal peptide, tat-type signal; it reads MLITPEKLYKQRRNFLKLGAGALISSSVLASKLSA. Residues 62 to 63, Cys-116, Thr-151, Asn-201, Arg-206, and 217 to 219 contribute to the Mo-molybdopterin site; these read YE and SIK.

Belongs to the MsrP family. Heterodimer of a catalytic subunit (MsrP) and a heme-binding subunit (MsrQ). It depends on Mo-molybdopterin as a cofactor. In terms of processing, predicted to be exported by the Tat system. The position of the signal peptide cleavage has not been experimentally proven.

The protein resides in the periplasm. The catalysed reaction is L-methionyl-[protein] + a quinone + H2O = L-methionyl-(S)-S-oxide-[protein] + a quinol. It carries out the reaction L-methionyl-[protein] + a quinone + H2O = L-methionyl-(R)-S-oxide-[protein] + a quinol. Functionally, part of the MsrPQ system that repairs oxidized periplasmic proteins containing methionine sulfoxide residues (Met-O), using respiratory chain electrons. Thus protects these proteins from oxidative-stress damage caused by reactive species of oxygen and chlorine generated by the host defense mechanisms. MsrPQ is essential for the maintenance of envelope integrity under bleach stress, rescuing a wide series of structurally unrelated periplasmic proteins from methionine oxidation. The catalytic subunit MsrP is non-stereospecific, being able to reduce both (R-) and (S-) diastereoisomers of methionine sulfoxide. The polypeptide is Protein-methionine-sulfoxide reductase catalytic subunit MsrP (Campylobacter jejuni subsp. jejuni serotype O:2 (strain ATCC 700819 / NCTC 11168)).